The chain runs to 851 residues: DNA mismatch repair protein MutS (851 aa).

602-609 (GPNMSGKS) is a binding site for ATP.

It belongs to the DNA mismatch repair MutS family.

Its function is as follows. This protein is involved in the repair of mismatches in DNA. It is possible that it carries out the mismatch recognition step. This protein has a weak ATPase activity. The sequence is that of DNA mismatch repair protein MutS from Streptococcus equi subsp. equi (strain 4047).